Reading from the N-terminus, the 623-residue chain is V-type proton ATPase catalytic subunit A (623 aa).

ATP is bound at residue G252–T259.

The protein belongs to the ATPase alpha/beta chains family. As to quaternary structure, V-ATPase is a heteromultimeric enzyme composed of a peripheral catalytic V1 complex (main components: subunits A, B, C, D, E, and F) attached to an integral membrane V0 proton pore complex (main component: the proteolipid protein).

The enzyme catalyses ATP + H2O + 4 H(+)(in) = ADP + phosphate + 5 H(+)(out). Its function is as follows. Catalytic subunit of the peripheral V1 complex of vacuolar ATPase. V-ATPase vacuolar ATPase is responsible for acidifying a variety of intracellular compartments in eukaryotic cells. The sequence is that of V-type proton ATPase catalytic subunit A from Daucus carota (Wild carrot).